Reading from the N-terminus, the 108-residue chain is Ig kappa chain V-V region MOPC 173 (108 aa).

The tract at residues Asp-1–Cys-23 is framework-1. An intrachain disulfide couples Cys-23 to Cys-88. The tract at residues Ser-24–Asx-34 is complementarity-determining-1. The tract at residues Trp-35–Tyr-49 is framework-2. The tract at residues Tyr-50–Ser-56 is complementarity-determining-2. A framework-3 region spans residues Gly-57–Cys-88. Positions Gln-89–Thr-97 are complementarity-determining-3. The tract at residues Phe-98–Arg-108 is framework-4.

This is Ig kappa chain V-V region MOPC 173 from Mus musculus (Mouse).